The primary structure comprises 207 residues: Sodium/potassium-transporting ATPase subunit beta-1-interacting protein 1 (207 aa).

Transmembrane regions (helical) follow at residues Gly2–Leu22, Ala35–Val55, and Leu62–Phe82. N-linked (GlcNAc...) asparagine glycosylation is present at Asn100. Residues Ala147 to Val167 form a helical membrane-spanning segment.

This sequence belongs to the NKAIN family. In terms of assembly, interacts with ATP1B1 C-terminus. In terms of tissue distribution, detected in the brain only and specifically in neurons. Expressed in multiple regions such as cerebral cortex, thalamus, hippocampus, olfactory bulb and brainstem as well as in cerebellum with high expression in granular cell layer.

The protein resides in the cell membrane. This chain is Sodium/potassium-transporting ATPase subunit beta-1-interacting protein 1 (Nkain1), found in Mus musculus (Mouse).